We begin with the raw amino-acid sequence, 60 residues long: Large ribosomal subunit protein uL30 (60 aa).

The protein belongs to the universal ribosomal protein uL30 family. Part of the 50S ribosomal subunit.

This Cupriavidus necator (strain ATCC 17699 / DSM 428 / KCTC 22496 / NCIMB 10442 / H16 / Stanier 337) (Ralstonia eutropha) protein is Large ribosomal subunit protein uL30.